Reading from the N-terminus, the 168-residue chain is DAZ-associated protein 2 (168 aa).

A compositionally biased stretch (low complexity) spans 1–13; the sequence is MNSKGQYPTQPTY. The tract at residues 1–25 is disordered; the sequence is MNSKGQYPTQPTYPVQPPGNPVYPQ. Positions 39 to 42 match the PPAY motif; it reads PPAY. Phosphoserine is present on S77.

As to quaternary structure, interacts with SOX6. Interacts with DAZ1 and DAZL. Interacts with IL17RB. May interact with FAM168B. Interacts with INCA1. Interacts with EIF4G1 and EIF4G2. Interacts (via PPAY motif) with NEDD4 (via WW domains). Interacts with transcription factor TCF4; the interaction results in localization of DAZAP2 to the nucleus. Interacts with transcription factors TCF7 and TCF7L1. Interacts with transcription factor LEF1. Interacts with serine/threonine-protein kinase HIPK2; the interaction results in phosphorylation of DAZAP2 which causes localization of DAZAP2 to the nucleus, reduces interaction of DAZAP2 with HIPK2 and prevents DAZAP2-dependent degradation of HIPK2. Interacts with ubiquitin ligase SIAH1; the interaction is decreased following phosphorylation of DAZAP2 by HIPK2. Interacts with TP53; the interaction is triggered by DNA damage. Post-translationally, ubiquitinated by SMURF2, leading to proteasomal degradation. Ubiquitinated by NEDD4, leading to proteasomal degradation. In terms of processing, following DNA damage, phosphorylated by HIPK2 which promotes DAZAP2 localization to the nucleus, reduces interaction of DAZAP2 with HIPK2 and SIAH1, and prevents DAZAP2-dependent ubiquitination of HIPK2 by E3 ubiquitin-protein ligase SIAH1 and subsequent HIPK2 proteasomal degradation.

The protein localises to the cytoplasm. The protein resides in the nucleus. It is found in the nucleus speckle. It localises to the nuclear body. Its subcellular location is the stress granule. Its function is as follows. In unstressed cells, promotes SIAH1-mediated polyubiquitination and degradation of the serine/threonine-protein kinase HIPK2, probably by acting as a loading factor that potentiates complex formation between HIPK2 and ubiquitin ligase SIAH1. In response to DNA damage, localizes to the nucleus following phosphorylation by HIPK2 and modulates the expression of a subset of TP53/p53 target genes by binding to TP53 at target gene promoters. This limits the expression of a number of cell death-mediating TP53 target genes, reducing DNA damage-induced cell death. Enhances the binding of transcription factor TCF7L2/TCF4, a Wnt signaling pathway effector, to the promoters of target genes. Plays a role in stress granule formation. The protein is DAZ-associated protein 2 of Bos taurus (Bovine).